A 62-amino-acid chain; its full sequence is uncharacterized protein (62 aa).

A helical transmembrane segment spans residues 15–37; that stretch reads FSSGVLISNFLLFNFIIISHSSL. The span at 41-56 shows a compositional bias: low complexity; sequence TTTTTTTTTTTTNTKS. Residues 41 to 62 form a disordered region; sequence TTTTTTTTTTTTNTKSTLHRSG.

It localises to the membrane. This is an uncharacterized protein from Dictyostelium discoideum (Social amoeba).